Here is a 217-residue protein sequence, read N- to C-terminus: GTP cyclohydrolase 1 (217 aa).

Zn(2+) is bound by residues cysteine 109, histidine 112, and cysteine 180.

This sequence belongs to the GTP cyclohydrolase I family. In terms of assembly, homomer.

The catalysed reaction is GTP + H2O = 7,8-dihydroneopterin 3'-triphosphate + formate + H(+). Its pathway is cofactor biosynthesis; 7,8-dihydroneopterin triphosphate biosynthesis; 7,8-dihydroneopterin triphosphate from GTP: step 1/1. This Aliivibrio salmonicida (strain LFI1238) (Vibrio salmonicida (strain LFI1238)) protein is GTP cyclohydrolase 1.